A 156-amino-acid polypeptide reads, in one-letter code: Small ribosomal subunit protein uS7 (156 aa).

Belongs to the universal ribosomal protein uS7 family. As to quaternary structure, part of the 30S ribosomal subunit. Contacts proteins S9 and S11.

In terms of biological role, one of the primary rRNA binding proteins, it binds directly to 16S rRNA where it nucleates assembly of the head domain of the 30S subunit. Is located at the subunit interface close to the decoding center, probably blocks exit of the E-site tRNA. In Bartonella henselae (strain ATCC 49882 / DSM 28221 / CCUG 30454 / Houston 1) (Rochalimaea henselae), this protein is Small ribosomal subunit protein uS7.